Here is a 278-residue protein sequence, read N- to C-terminus: Ras-related protein Rab-40A-like (278 aa).

Residues glycine 26, lysine 27, and serine 28 each contribute to the GTP site. Serine 28 lines the Mg(2+) pocket. The switch-I stretch occupies residues 41-49 (SPYSHLGGI). Aspartate 69 is a Mg(2+) binding site. Residues glycine 72, asparagine 126, and arginine 127 each coordinate GTP. Residues 72-88 (GQGRFCTIFRSYSRGAQ) are switch-II. The SOCS box domain maps to 175–228 (LLRHRLNWLGRPSKVLSLQDLCCRTIVSCTPVHLVDKLPLPIALRSHLKSFSMA). A lipid anchor (S-palmitoyl cysteine) is attached at cysteine 270. A lipid anchor (S-geranylgeranyl cysteine) is attached at cysteine 275.

It belongs to the small GTPase superfamily. Rab family. It depends on Mg(2+) as a cofactor. In terms of tissue distribution, expressed in brain, lung, heart, skeletal muscle, kidney and liver. Highest expression in brain. Expressed in fetal brain and kidney.

It is found in the membrane. The protein localises to the cytoplasm. The protein resides in the mitochondrion. It carries out the reaction GTP + H2O = GDP + phosphate + H(+). It participates in protein modification; protein ubiquitination. Regulated by guanine nucleotide exchange factors (GEFs) which promote the exchange of bound GDP for free GTP. Regulated by GTPase activating proteins (GAPs) which increase the GTP hydrolysis activity. Inhibited by GDP dissociation inhibitors (GDIs). Functionally, may act as substrate-recognition component of the ECS(RAB40) E3 ubiquitin ligase complex which mediates the ubiquitination and subsequent proteasomal degradation of target proteins. The Rab40 subfamily belongs to the Rab family that are key regulators of intracellular membrane trafficking, from the formation of transport vesicles to their fusion with membranes. Rabs cycle between an inactive GDP-bound form and an active GTP-bound form that is able to recruit to membranes different sets of downstream effectors directly responsible for vesicle formation, movement, tethering and fusion. This chain is Ras-related protein Rab-40A-like, found in Homo sapiens (Human).